The primary structure comprises 59 residues: Early growth response protein 1 (59 aa).

3 consecutive C2H2-type zinc fingers follow at residues 1-18, 24-46, and 52-59; these read CDRRFSRSDELTRHIRIH, FQCRICMRNFSRSDHLTTHIRTH, and FACDICGR.

This sequence belongs to the EGR C2H2-type zinc-finger protein family.

Its subcellular location is the nucleus. The protein resides in the cytoplasm. Functionally, transcriptional regulator. Recognizes and binds to the DNA sequence 5'-GCG(T/G)GGGCG-3'(EGR-site) in the promoter region of target genes. Binds double-stranded target DNA, irrespective of the cytosine methylation status. Regulates the transcription of numerous target genes, and thereby plays an important role in regulating the response to growth factors, DNA damage, and ischemia. Plays a role in the regulation of cell survival, proliferation and cell death. Mediates responses to ischemia and hypoxia; regulates the expression of proteins that are involved in inflammatory processes. Plays a role in regulating the expression of circadian clock genes. This is Early growth response protein 1 (EGR1) from Serinus canaria (Island canary).